The chain runs to 283 residues: MAISAAQVKELRERTGAGMMDCKKALEETNGDMELAIDNMRKSGAAKAAKKAGNIAADGTILIKNGEGFAVLLEVNCQTDFVAKDANFLGFANAVLDVAAASKVTLEDLKAQFEEARVALVAKIGENINVRRVEYIDGAKLASYRHGERIGVVVTGDADEETLKHLAMHVAASKPEYVNPEDVPADVVAREQALQIEISMNEGKPADIAEKMVVGRMKKFTGEISLTGQAYIMEPKKTVGEFLKEKGAKVTNFIRLEVGEGIEKKEEDFAAEVAAQIAASKKA.

The interval 79 to 82 is involved in Mg(2+) ion dislocation from EF-Tu; that stretch reads TDFV.

Belongs to the EF-Ts family.

The protein localises to the cytoplasm. Its function is as follows. Associates with the EF-Tu.GDP complex and induces the exchange of GDP to GTP. It remains bound to the aminoacyl-tRNA.EF-Tu.GTP complex up to the GTP hydrolysis stage on the ribosome. This Shewanella oneidensis (strain ATCC 700550 / JCM 31522 / CIP 106686 / LMG 19005 / NCIMB 14063 / MR-1) protein is Elongation factor Ts.